A 209-amino-acid polypeptide reads, in one-letter code: Protein lin-28 homolog A (209 aa).

A disordered region spans residues 1–31 (MGSVSNQQFAGGCAKAAEKAPEEAPPDAARA). An N-acetylglycine modification is found at G2. At S3 the chain carries Phosphoserine. A CSD domain is found at 39–112 (HGAGICKWFN…GLESIRVTGP (74 aa)). Residues 113–136 (GGVFCIGSERRPKGKNMQKRRSKG) form a flexible linker region. Phosphoserine is present on S120. CCHC-type zinc fingers lie at residues 137–154 (DRCYNCGGLDHHAKECKL) and 159–176 (KKCHFCQSINHMVASCPL). Residues 177-209 (KAQQGPSSQGKPAYFREEEEEIHSPALLPEAQN) are disordered. S200 is modified (phosphoserine).

The protein belongs to the lin-28 family. Monomer. During skeletal muscle differentiation, associated with translation initiation complexes in the polysomal compartment. Directly interacts with EIF3S2. Interacts with NCL in an RNA-dependent manner. Interacts with TUT4 in the presence of pre-let-7 RNA. Expressed in embryonic stem cells (ES cells), spermatagonia and testis. Expressed in numerous epithelial tissues including the epithelia of the small intestine, the intralobular duct epithelium of the mammary gland and the epithelia of Henle's loop in the kidney and in the collecting duct (at protein level). Also expressed in the myocardium and skeletal muscle (at protein level).

The protein resides in the cytoplasm. Its subcellular location is the rough endoplasmic reticulum. It localises to the P-body. The protein localises to the stress granule. It is found in the nucleus. The protein resides in the nucleolus. Its function is as follows. RNA-binding protein that inhibits processing of pre-let-7 miRNAs and regulates translation of mRNAs that control developmental timing, pluripotency and metabolism. Seems to recognize a common structural G-quartet (G4) feature in its miRNA and mRNA targets. 'Translational enhancer' that drives specific mRNAs to polysomes and increases the efficiency of protein synthesis. Its association with the translational machinery and target mRNAs results in an increased number of initiation events per molecule of mRNA and, indirectly, in mRNA stabilization. Binds IGF2 mRNA, MYOD1 mRNA, ARBP/36B4 ribosomal protein mRNA and its own mRNA. Essential for skeletal muscle differentiation program through the translational up-regulation of IGF2 expression. Suppressor of microRNA (miRNA) biogenesis, including that of let-7, miR107, miR-143 and miR-200c. Specifically binds the miRNA precursors (pre-miRNAs), recognizing an 5'-GGAG-3' motif found in pre-miRNA terminal loop, and recruits TUT4 and TUT7 uridylyltransferaseS. This results in the terminal uridylation of target pre-miRNAs. Uridylated pre-miRNAs fail to be processed by Dicer and undergo degradation. The repression of let-7 expression is required for normal development and contributes to maintain the pluripotent state by preventing let-7-mediated differentiation of embryonic stem cells. Localized to the periendoplasmic reticulum area, binds to a large number of spliced mRNAs and inhibits the translation of mRNAs destined for the ER, reducing the synthesis of transmembrane proteins, ER or Golgi lumen proteins, and secretory proteins. Binds to and enhances the translation of mRNAs for several metabolic enzymes, such as PFKP, PDHA1 or SDHA, increasing glycolysis and oxidative phosphorylation. Which, with the let-7 repression may enhance tissue repair in adult tissue. This Mus musculus (Mouse) protein is Protein lin-28 homolog A (Lin28a).